Here is a 239-residue protein sequence, read N- to C-terminus: Xyloglucan-specific endo-beta-1,4-glucanase A (239 aa).

The signal sequence occupies residues 1-14; that stretch reads MKLLALSLASLASA. Asn-172 carries N-linked (GlcNAc...) asparagine glycosylation.

The protein belongs to the glycosyl hydrolase 12 (cellulase H) family.

Its subcellular location is the secreted. The catalysed reaction is xyloglucan + H2O = xyloglucan oligosaccharides.. In terms of biological role, catalyzes endohydrolysis of 1,4-beta-D-glucosidic linkages in xyloglucan with retention of the beta-configuration of the glycosyl residues. Specific for xyloglucan and does not hydrolyze other cell wall components. Active against tamarind xyloglucan. This is Xyloglucan-specific endo-beta-1,4-glucanase A (xgeA) from Emericella nidulans (strain FGSC A4 / ATCC 38163 / CBS 112.46 / NRRL 194 / M139) (Aspergillus nidulans).